A 122-amino-acid chain; its full sequence is MIQSQTHLNVADNSGARTIMCIRIIGSSNRRYAHIGDIIVAVIKDAVPNMTLEKSEVVRAVIVRTRKELKRDNGIILRYDDNAAVIIDKEGNPKGTRIFGAIPRELRKLNFNKIVSLAPEVL.

This sequence belongs to the universal ribosomal protein uL14 family. Part of the 50S ribosomal subunit.

The protein localises to the plastid. Functionally, binds to 23S rRNA. The sequence is that of Large ribosomal subunit protein uL14c from Cuscuta obtusiflora (Peruvian dodder).